Consider the following 308-residue polypeptide: Methionine synthase (308 aa).

Zn(2+) contacts are provided by His192, Cys194, Glu215, and Cys282.

This sequence belongs to the archaeal MetE family. Zn(2+) is required as a cofactor.

It functions in the pathway amino-acid biosynthesis; L-methionine biosynthesis via de novo pathway. Its function is as follows. Catalyzes the transfer of a methyl group to L-homocysteine resulting in methionine formation. Can use methylcobalamin and methylcobinamide as methyl donors, but methylcobalamin is not considered to be the physiological substrate. In Methanocaldococcus jannaschii (strain ATCC 43067 / DSM 2661 / JAL-1 / JCM 10045 / NBRC 100440) (Methanococcus jannaschii), this protein is Methionine synthase.